The primary structure comprises 290 residues: Nucleotide-binding protein XfasM23_0667 (290 aa).

13 to 20 (GLSGSGKS) contributes to the ATP binding site. Residue 65 to 68 (DIRS) participates in GTP binding.

This sequence belongs to the RapZ-like family.

In terms of biological role, displays ATPase and GTPase activities. The chain is Nucleotide-binding protein XfasM23_0667 from Xylella fastidiosa (strain M23).